A 223-amino-acid polypeptide reads, in one-letter code: Dephospho-CoA kinase (223 aa).

The region spanning 3–204 (VFGLSGGAGS…AGRHRFRVAR (202 aa)) is the DPCK domain. 11 to 16 (GSGKST) contributes to the ATP binding site.

It belongs to the CoaE family.

Its subcellular location is the cytoplasm. It carries out the reaction 3'-dephospho-CoA + ATP = ADP + CoA + H(+). It participates in cofactor biosynthesis; coenzyme A biosynthesis; CoA from (R)-pantothenate: step 5/5. In terms of biological role, catalyzes the phosphorylation of the 3'-hydroxyl group of dephosphocoenzyme A to form coenzyme A. This Anaplasma marginale (strain St. Maries) protein is Dephospho-CoA kinase.